The sequence spans 76 residues: Defensin-like protein 125 (76 aa).

Residues 1–25 form the signal peptide; sequence MTKAITLAIFMVVLVLGMVTKETQG. 4 disulfides stabilise this stretch: Cys30–Cys74, Cys41–Cys60, Cys46–Cys68, and Cys50–Cys70.

The protein belongs to the DEFL family.

Its subcellular location is the secreted. In Arabidopsis thaliana (Mouse-ear cress), this protein is Defensin-like protein 125 (LCR54).